Consider the following 119-residue polypeptide: Large ribosomal subunit protein uL18 (119 aa).

It belongs to the universal ribosomal protein uL18 family. In terms of assembly, part of the 50S ribosomal subunit; part of the 5S rRNA/L5/L18/L25 subcomplex. Contacts the 5S and 23S rRNAs.

This is one of the proteins that bind and probably mediate the attachment of the 5S RNA into the large ribosomal subunit, where it forms part of the central protuberance. This is Large ribosomal subunit protein uL18 from Lactobacillus delbrueckii subsp. bulgaricus (strain ATCC 11842 / DSM 20081 / BCRC 10696 / JCM 1002 / NBRC 13953 / NCIMB 11778 / NCTC 12712 / WDCM 00102 / Lb 14).